The chain runs to 399 residues: Bombesin receptor subtype-3 (399 aa).

Topologically, residues 1 to 41 are extracellular; sequence MAQRQPHSPNQTLISITNDTESSSSVVSNDNTNKGWSGDNS. Asn-10 and Asn-18 each carry an N-linked (GlcNAc...) asparagine glycan. Residues 42-63 traverse the membrane as a helical segment; sequence PGIEALCAIYITYAVIISVGIL. Topologically, residues 64-82 are cytoplasmic; sequence GNAILIKVFFKTKSMQTVP. A helical membrane pass occupies residues 83–103; it reads NIFITSLAFGDLLLLLTCVPV. The Extracellular segment spans residues 104-121; sequence DATHYLAEGWLFGRIGCK. Cys-120 and Cys-203 form a disulfide bridge. Residues 122-143 form a helical membrane-spanning segment; the sequence is VLSFIRLTSVGVSVFTLTILSA. Over 144–163 the chain is Cytoplasmic; it reads DRYKAVVKPLERQPSNAILK. The helical transmembrane segment at 164 to 184 threads the bilayer; sequence TCVKAGCVWIVSMIFALPEAI. The Extracellular portion of the chain corresponds to 185 to 220; the sequence is FSNVYTFRDPNKNMTFESCTSYPVSKKLLQEIHSLL. A helical membrane pass occupies residues 221–241; it reads CFLVFYIIPLSIISVYYSLIA. The Cytoplasmic segment spans residues 242 to 272; sequence RTLYKSTLNIPTEEQSHARKQIESRKRIART. A helical transmembrane segment spans residues 273–293; sequence VLVLVALFALCWLPNHLLYLY. Over 294-313 the chain is Extracellular; that stretch reads HSFTSQTYVDPSAMHFIFTI. The chain crosses the membrane as a helical span at residues 314-333; sequence FSRVLAFSNSCVNPFALYWL. Topologically, residues 334 to 399 are cytoplasmic; that stretch reads SKSFQKHFKA…CSVKQAEDRF (66 aa). The S-palmitoyl cysteine moiety is linked to residue Cys-347.

It belongs to the G-protein coupled receptor 1 family. Interacts with C6orf89. In terms of tissue distribution, in germ cells in testis. Lung carcinoma cells.

The protein resides in the cell membrane. Role in sperm cell division, maturation, or function. This receptor mediates its action by association with G proteins that activate a phosphatidylinositol-calcium second messenger system. This Homo sapiens (Human) protein is Bombesin receptor subtype-3 (BRS3).